The chain runs to 3312 residues: MMARRPPWRGLGGRSTPILLLLLLSLFPLSQEELGGGGHQGWDPGLAATTGPRAHIGGGALALCPESSGVREDGGPGLGVREPIFVGLRGRRQSARNSRGPPEQPNEELGIEHGVQPLGSRERETGQGPGSVLYWRPEVSSCGRTGPLQRGSLSPGALSSGVPGSGNSSPLPSDFLIRHHGPKPVSSQRNAGTGSRKRVGTARCCGELWATGSKGQGERATTSGAERTAPRRNCLPGASGSGPELDSAPRTARTAPASGSAPRESRTAPEPAPKRMRSRGLFRCRFLPQRPGPRPPGLPARPEARKVTSANRARFRRAANRHPQFPQYNYQTLVPENEAAGTAVLRVVAQDPDAGEAGRLVYSLAALMNSRSLELFSIDPQSGLIRTAAALDRESMERHYLRVTAQDHGSPRLSATTMVAVTVADRNDHSPVFEQAQYRETLRENVEEGYPILQLRATDGDAPPNANLRYRFVGPPAARAAAAAAFEIDPRSGLISTSGRVDREHMESYELVVEASDQGQEPGPRSATVRVHITVLDENDNAPQFSEKRYVAQVREDVRPHTVVLRVTATDRDKDANGLVHYNIISGNSRGHFAIDSLTGEIQVVAPLDFEAEREYALRIRAQDAGRPPLSNNTGLASIQVVDINDHIPIFVSTPFQVSVLENAPLGHSVIHIQAVDADHGENARLEYSLTGVAPDTPFVINSATGWVSVSGPLDRESVEHYFFGVEARDHGSPPLSASASVTVTVLDVNDNRPEFTMKEYHLRLNEDAAVGTSVVSVTAVDRDANSAISYQITGGNTRNRFAISTQGGVGLVTLALPLDYKQERYFKLVLTASDRALHDHCYVHINITDANTHRPVFQSAHYSVSVNEDRPMGSTIVVISASDDDVGENARITYLLEDNLPQFRIDADSGAITLQAPLDYEDQVTYTLAITARDNGIPQKADTTYVEVMVNDVNDNAPQFVASHYTGLVSEDAPPFTSVLQISATDRDAHANGRVQYTFQNGEDGDGDFTIEPTSGIVRTVRRLDREAVSVYELTAYAVDRGVPPLRTPVSIQVMVQDVNDNAPVFPAEEFEVRVKENSIVGSVVAQITAVDPDEGPNAHIMYQIVEGNIPELFQMDIFSGELTALIDLDYEARQEYVIVVQATSAPLVSRATVHVRLVDQNDNSPVLNNFQILFNNYVSNRSDTFPSGIIGRIPAYDPDVSDHLFYSFERGNELQLLVVNQTSGELRLSRKLDNNRPLVASMLVTVTDGLHSVTAQCVLRVVIITEELLANSLTVRLENMWQERFLSPLLGRFLEGVAAVLATPAEDVFIFNIQNDTDVGGTVLNVSFSALAPRGAGAGAAGPWFSSEELQEQLYVRRAALAARSLLDVLPFDDNVCLREPCENYMKCVSVLRFDSSAPFLASASTLFRPIQPIAGLRCRCPPGFTGDFCETELDLCYSNPCRNGGACARREGGYTCVCRPRFTGEDCELDTEAGRCVPGVCRNGGTCTDAPNGGFRCQCPAGGAFEGPRCEVAARSFPPSSFVMFRGLRQRFHLTLSLSFATVQQSGLLFYNGRLNEKHDFLALELVAGQVRLTYSTGESNTVVSPTVPGGLSDGQWHTVHLRYYNKPRTDALGGAQGPSKDKVAVLSVDDCDVAVALQFGAEIGNYSCAAAGVQTSSKKSLDLTGPLLLGGVPNLPENFPVSHKDFIGCMRDLHIDGRRVDMAAFVANNGTMAGCQAKLHFCDSGPCKNSGFCSERWGSFSCDCPVGFGGKDCQLTMAHPHHFRGNGTLSWNFGSDMAVSVPWYLGLAFRTRATQGVLMQVQAGPHSTLLCQLDRGLLSVTVTRGSGRASHLLLDQVTVSDGRWHDLRLELQEEPGGRRGHHVLMVSLDFSLFQDTMAVGSELQGLKVKQLHVGGLPPGSAEEAPQGLVGCIQGVWLGSTPSGSPALLPPSHRVNAEPGCVVTNACASGPCPPHADCRDLWQTFSCTCQPGYYGPGCVDACLLNPCQNQGSCRHLPGAPHGYTCDCVGGYFGHHCEHRMDQQCPRGWWGSPTCGPCNCDVHKGFDPNCNKTNGQCHCKEFHYRPRGSDSCLPCDCYPVGSTSRSCAPHSGQCPCRPGALGRQCNSCDSPFAEVTASGCRVLYDACPKSLRSGVWWPQTKFGVLATVPCPRGALGAAVRLCDEAQGWLEPDLFNCTSPAFRELSLLLDGLELNKTALDTMEAKKLAQRLREVTGHTDHYFSQDVRVTARLLAHLLAFESHQQGFGLTATQDAHFNENLLWAGSALLAPETGDLWAALGQRAPGGSPGSAGLVRHLEEYAATLARNMELTYLNPMGLVTPNIMLSIDRMEHPSSPRGARRYPRYHSNLFRGQDAWDPHTHVLLPSQSPRPSPSEVLPTSSSIENSTTSSVVPPPAPPEPEPGISIIILLVYRTLGGLLPAQFQAERRGARLPQNPVMNSPVVSVAVFHGRNFLRGILESPISLEFRLLQTANRSKAICVQWDPPGLAEQHGVWTARDCELVHRNGSHARCRCSRTGTFGVLMDASPRERLEGDLELLAVFTHVVVAVSVAALVLTAAILLSLRSLKSNVRGIHANVAAALGVAELLFLLGIHRTHNQLVCTAVAILLHYFFLSTFAWLFVQGLHLYRMQVEPRNVDRGAMRFYHALGWGVPAVLLGLAVGLDPEGYGNPDFCWISVHEPLIWSFAGPVVLVIVMNGTMFLLAARTSCSTGQREAKKTSALTLRSSFLLLLLVSASWLFGLLAVNHSILAFHYLHAGLCGLQGLAVLLLFCVLNADARAAWMPACLGRKAAPEEARPAPGLGPGAYNNTALFEESGLIRITLGASTVSSVSSARSGRTQDQDSQRGRSYLRDNVLVRHGSAADHTDHSLQAHAGPTDLDVAMFHRDAGADSDSDSDLSLEEERSLSIPSSESEDNGRTRGRFQRPLCRAAQSERLLTHPKDVDGNDLLSYWPALGECEAAPCALQTWGSERRLGLDTSKDAANNNQPDPALTSGDETSLGRAQRQRKGILKNRLQYPLVPQTRGAPELSWCRAATLGHRAVPAASYGRIYAGGGTGSLSQPASRYSSREQLDLLLRRQLSRERLEEAPAPVLRPLSRPGSQECMDAAPGRLEPKDRGSTLPRRQPPRDYPGAMAGRFGSRDALDLGAPREWLSTLPPPRRTRDLDPQPPPLPLSPQRQLSRDPLLPSRPLDSLSRSSNSREQLDQVPSRHPSREALGPLPQLLRAREDSVSGPSHGPSTEQLDILSSILASFNSSALSSVQSSSTPLGPHTTATPSATASVLGPSTPRSATSHSISELSPDSEVPRSEGHS.

An N-terminal signal peptide occupies residues 1-32 (MMARRPPWRGLGGRSTPILLLLLLSLFPLSQE). Residues 33 to 2540 (ELGGGGHQGW…RLEGDLELLA (2508 aa)) are Extracellular-facing. 3 disordered regions span residues 90 to 112 (GRRQ…LGIE), 143 to 199 (GRTG…RKRV), and 212 to 306 (GSKG…EARK). Residues 159–173 (SSGVPGSGNSSPLPS) are compositionally biased toward low complexity. Residues 290–299 (RPGPRPPGLP) are compositionally biased toward pro residues. 9 consecutive Cadherin domains span residues 326–433 (PQYN…SPVF), 434–545 (EQAQ…APQF), 546–651 (SEKR…IPIF), 652–756 (VSTP…RPEF), 757–858 (TMKE…RPVF), 859–961 (QSAH…APQF), 962–1067 (VASH…APVF), 1068–1169 (PAEE…SPVL), and 1170–1265 (NNFQ…RVVI). The N-linked (GlcNAc...) asparagine glycan is linked to Asn632. Asn847 carries N-linked (GlcNAc...) asparagine glycosylation. Residues Asn1182, Asn1222, Asn1317, and Asn1327 are each glycosylated (N-linked (GlcNAc...) asparagine). The 59-residue stretch at 1375-1433 (DDNVCLREPCENYMKCVSVLRFDSSAPFLASASTLFRPIQPIAGLRCRCPPGFTGDFCE) folds into the EGF-like 1; calcium-binding domain. Intrachain disulfides connect Cys1379/Cys1390, Cys1384/Cys1421, Cys1423/Cys1432, Cys1439/Cys1450, Cys1444/Cys1459, Cys1461/Cys1470, Cys1479/Cys1490, Cys1484/Cys1500, and Cys1502/Cys1513. The EGF-like 2; calcium-binding domain maps to 1435–1471 (ELDLCYSNPCRNGGACARREGGYTCVCRPRFTGEDCE). One can recognise an EGF-like 3; calcium-binding domain in the interval 1475-1514 (EAGRCVPGVCRNGGTCTDAPNGGFRCQCPAGGAFEGPRCE). One can recognise a Laminin G-like 1 domain in the interval 1515 to 1719 (VAARSFPPSS…VANNGTMAGC (205 aa)). Residues Asn1649 and Asn1713 are each glycosylated (N-linked (GlcNAc...) asparagine). Intrachain disulfides connect Cys1693–Cys1719, Cys1726–Cys1737, Cys1731–Cys1746, and Cys1748–Cys1757. The EGF-like 4; calcium-binding domain occupies 1722 to 1758 (KLHFCDSGPCKNSGFCSERWGSFSCDCPVGFGGKDCQ). The Laminin G-like 2 domain occupies 1764–1944 (PHHFRGNGTL…SHRVNAEPGC (181 aa)). Asn1770 carries an N-linked (GlcNAc...) asparagine glycan. Intrachain disulfides connect Cys1915–Cys1944, Cys1950–Cys1961, Cys1955–Cys1970, Cys1972–Cys1981, Cys1985–Cys1996, Cys1990–Cys2008, Cys2010–Cys2019, Cys2027–Cys2040, and Cys2042–Cys2052. Residues 1946–1982 (VTNACASGPCPPHADCRDLWQTFSCTCQPGYYGPGCV) enclose the EGF-like 5; calcium-binding domain. A (3R)-3-hydroxyaspartate modification is found at Asp1963. The EGF-like 6; calcium-binding domain maps to 1983–2020 (DACLLNPCQNQGSCRHLPGAPHGYTCDCVGGYFGHHCE). Positions 2021 to 2053 (HRMDQQCPRGWWGSPTCGPCNCDVHKGFDPNCN) constitute an EGF-like 7; calcium-binding domain. The N-linked (GlcNAc...) asparagine glycan is linked to Asn2053. The region spanning 2055–2090 (TNGQCHCKEFHYRPRGSDSCLPCDCYPVGSTSRSCA) is the EGF-like 8; calcium-binding domain. Disulfide bonds link Cys2059-Cys2074, Cys2061-Cys2077, Cys2079-Cys2089, Cys2098-Cys2107, and Cys2110-Cys2122. The Laminin EGF-like domain maps to 2077 to 2124 (CDCYPVGSTSRSCAPHSGQCPCRPGALGRQCNSCDSPFAEVTASGCRV). The residue at position 2126 (Tyr2126) is a Phosphotyrosine. N-linked (GlcNAc...) asparagine glycans are attached at residues Asn2177, Asn2196, Asn2386, Asn2474, and Asn2506. The interval 2361–2399 (THVLLPSQSPRPSPSEVLPTSSSIENSTTSSVVPPPAPP) is disordered. One can recognise a GAIN-B domain in the interval 2368–2530 (QSPRPSPSEV…GVLMDASPRE (163 aa)). Low complexity predominate over residues 2380 to 2391 (TSSSIENSTTSS). 2 cysteine pairs are disulfide-bonded: Cys2480/Cys2512 and Cys2500/Cys2514. A GPS region spans residues 2480 to 2530 (CVQWDPPGLAEQHGVWTARDCELVHRNGSHARCRCSRTGTFGVLMDASPRE). Residues 2541 to 2561 (VFTHVVVAVSVAALVLTAAIL) form a helical membrane-spanning segment. Topologically, residues 2562–2572 (LSLRSLKSNVR) are cytoplasmic. The helical transmembrane segment at 2573–2593 (GIHANVAAALGVAELLFLLGI) threads the bilayer. The Extracellular segment spans residues 2594-2601 (HRTHNQLV). A helical membrane pass occupies residues 2602-2622 (CTAVAILLHYFFLSTFAWLFV). The Cytoplasmic portion of the chain corresponds to 2623 to 2643 (QGLHLYRMQVEPRNVDRGAMR). The helical transmembrane segment at 2644–2664 (FYHALGWGVPAVLLGLAVGLD) threads the bilayer. Over 2665–2681 (PEGYGNPDFCWISVHEP) the chain is Extracellular. The chain crosses the membrane as a helical span at residues 2682 to 2702 (LIWSFAGPVVLVIVMNGTMFL). The Cytoplasmic portion of the chain corresponds to 2703–2725 (LAARTSCSTGQREAKKTSALTLR). Residues 2726 to 2746 (SSFLLLLLVSASWLFGLLAVN) form a helical membrane-spanning segment. At 2747 to 2753 (HSILAFH) the chain is on the extracellular side. The chain crosses the membrane as a helical span at residues 2754–2774 (YLHAGLCGLQGLAVLLLFCVL). Topologically, residues 2775–3312 (NADARAAWMP…SEVPRSEGHS (538 aa)) are cytoplasmic. 2 disordered regions span residues 2888-2927 (AGAD…QRPL) and 2978-3006 (TSKD…AQRQ). A compositionally biased stretch (acidic residues) spans 2890–2900 (ADSDSDSDLSL). Tyr3051 is subject to Phosphotyrosine. Disordered regions lie at residues 3086–3243 (EEAP…TEQL) and 3256–3312 (SALS…EGHS). Ser3097 is modified (phosphoserine). Low complexity-rich tracts occupy residues 3175–3198 (SPQR…SRSS), 3256–3265 (SALSSVQSSS), and 3272–3281 (TTATPSATAS). The segment covering 3287 to 3300 (TPRSATSHSISELS) has biased composition (polar residues).

The protein belongs to the G-protein coupled receptor 2 family. LN-TM7 subfamily.

The protein resides in the cell membrane. Receptor that may have an important role in cell/cell signaling during nervous system formation. The polypeptide is Cadherin EGF LAG seven-pass G-type receptor 3 (CELSR3) (Homo sapiens (Human)).